The primary structure comprises 751 residues: Probable alpha-galactosidase C (751 aa).

An N-terminal signal peptide occupies residues Met1–Ala27. 9 N-linked (GlcNAc...) asparagine glycosylation sites follow: Asn49, Asn57, Asn162, Asn186, Asn194, Asn366, Asn433, Asn452, and Asn500. The active-site Nucleophile is Asp510. Asp572 serves as the catalytic Proton donor. N-linked (GlcNAc...) asparagine glycosylation is present at Asn720.

The protein belongs to the glycosyl hydrolase 36 family. In terms of assembly, homotetramer. Mg(2+) serves as cofactor. NAD(+) is required as a cofactor.

It localises to the secreted. It carries out the reaction Hydrolysis of terminal, non-reducing alpha-D-galactose residues in alpha-D-galactosides, including galactose oligosaccharides, galactomannans and galactolipids.. Its function is as follows. Hydrolyzes a variety of simple alpha-D-galactoside as well as more complex molecules such as oligosaccharides and polysaccharides. This is Probable alpha-galactosidase C (aglC) from Aspergillus oryzae (strain ATCC 42149 / RIB 40) (Yellow koji mold).